A 340-amino-acid chain; its full sequence is tRNA N6-adenosine threonylcarbamoyltransferase (340 aa).

Fe cation is bound by residues His113 and His117. Residues 135-139 (LVSGG), Asp169, Gly182, Asp186, and Asn274 contribute to the substrate site. Residue Asp302 coordinates Fe cation.

The protein belongs to the KAE1 / TsaD family. The cofactor is Fe(2+).

It localises to the cytoplasm. The catalysed reaction is L-threonylcarbamoyladenylate + adenosine(37) in tRNA = N(6)-L-threonylcarbamoyladenosine(37) in tRNA + AMP + H(+). In terms of biological role, required for the formation of a threonylcarbamoyl group on adenosine at position 37 (t(6)A37) in tRNAs that read codons beginning with adenine. Is involved in the transfer of the threonylcarbamoyl moiety of threonylcarbamoyl-AMP (TC-AMP) to the N6 group of A37, together with TsaE and TsaB. TsaD likely plays a direct catalytic role in this reaction. This is tRNA N6-adenosine threonylcarbamoyltransferase from Mycolicibacterium gilvum (strain PYR-GCK) (Mycobacterium gilvum (strain PYR-GCK)).